The primary structure comprises 260 residues: Taurine import ATP-binding protein TauB (260 aa).

The ABC transporter domain occupies 6-235 (AHQVSVVYAS…RYAAGESMRS (230 aa)). 40–47 (GASGCGKS) contacts ATP.

It belongs to the ABC transporter superfamily. Taurine importer (TC 3.A.1.17.1) family. The complex is composed of two ATP-binding proteins (TauB), two transmembrane proteins (TauC) and a solute-binding protein (TauA).

Its subcellular location is the cell inner membrane. It carries out the reaction taurine(out) + ATP + H2O = taurine(in) + ADP + phosphate + H(+). Functionally, part of the ABC transporter complex TauABC involved in taurine import. Responsible for energy coupling to the transport system. This chain is Taurine import ATP-binding protein TauB, found in Burkholderia thailandensis (strain ATCC 700388 / DSM 13276 / CCUG 48851 / CIP 106301 / E264).